The sequence spans 143 residues: Lysozyme C (143 aa).

The N-terminal stretch at 1-15 (MKIPVFLLLLALANA) is a signal peptide. Residues 16-143 (KVFQRCEWAR…LSAYIAGCGL (128 aa)) enclose the C-type lysozyme domain. Intrachain disulfides connect cysteine 21–cysteine 141, cysteine 45–cysteine 129, cysteine 79–cysteine 94, and cysteine 90–cysteine 108. Catalysis depends on residues glutamate 50 and aspartate 67.

This sequence belongs to the glycosyl hydrolase 22 family. In terms of assembly, monomer.

It localises to the secreted. The catalysed reaction is Hydrolysis of (1-&gt;4)-beta-linkages between N-acetylmuramic acid and N-acetyl-D-glucosamine residues in a peptidoglycan and between N-acetyl-D-glucosamine residues in chitodextrins.. Lysozymes have primarily a bacteriolytic function; those in tissues and body fluids are associated with the monocyte-macrophage system and enhance the activity of immunoagents. The sequence is that of Lysozyme C from Takifugu rubripes (Japanese pufferfish).